The sequence spans 57 residues: MAVPKRRMSRSNTRSRRAQWKAKPTELVGVTVAGQQHKVPRRLLKAARLGLIDLDRR.

Over residues 1-20 the composition is skewed to basic residues; it reads MAVPKRRMSRSNTRSRRAQW. A disordered region spans residues 1-22; sequence MAVPKRRMSRSNTRSRRAQWKA.

This sequence belongs to the bacterial ribosomal protein bL32 family.

This chain is Large ribosomal subunit protein bL32, found in Mycobacterium sp. (strain JLS).